A 1588-amino-acid polypeptide reads, in one-letter code: Ubiquitin carboxyl-terminal hydrolase 54 (1588 aa).

Arg-12 is modified (omega-N-methylarginine). The region spanning 31-352 is the USP domain; it reads KGLSNEPGQN…QPLLLLYADP (322 aa). The active-site Nucleophile is Cys-42. His-67, Cys-69, Cys-74, Cys-77, His-133, Cys-145, Cys-150, His-153, Cys-166, Cys-169, Cys-225, and Cys-229 together coordinate Zn(2+). The active-site Proton acceptor is the His-302. 2 stretches are compositionally biased toward basic and acidic residues: residues 380–391 and 424–434; these read DSGHLTDSECNQ and SEGETLKEKQA. Disordered regions lie at residues 380-447 and 459-519; these read DSGH…TSRL and HSRP…PTWR. Position 424 is a phosphoserine (Ser-424). Polar residues-rich tracts occupy residues 436–445 and 459–471; these read RNASKSSSTS and HSRPSLASQTNAA. Low complexity predominate over residues 499 to 512; the sequence is TESTSSEARSSSSS. 3 positions are modified to phosphoserine: Ser-574, Ser-613, and Ser-616. A compositionally biased stretch (low complexity) spans 601-616; sequence ESGYESSERNSSSPVS. The segment at 601-620 is disordered; sequence ESGYESSERNSSSPVSLDAA. Positions 678-712 form a coiled coil; that stretch reads TSKSELDELQEEVARRAQEQELRKKREKELEAAKG. Disordered regions lie at residues 801–839, 856–895, 950–969, 1093–1172, and 1525–1562; these read RSLQDRMQQQPPSQQPVQPSASLPSQGGGLPQPTSEQSV, DSELGATSPFFHSPASCPEPHSSLVSPSPAQSVSQHSPPG, EDNSCCSKFPPQEGRDTTQD, TRDV…SRRR, and GSVLGSRTPGPRRIDVPPDDDGRQSQYPSQYRHRSAGE. Residues 808–825 are compositionally biased toward low complexity; it reads QQQPPSQQPVQPSASLPS. The span at 878–895 shows a compositional bias: polar residues; sequence SLVSPSPAQSVSQHSPPG. Ser-1138 is modified (phosphoserine). A compositionally biased stretch (basic and acidic residues) spans 1536–1547; the sequence is RRIDVPPDDDGR.

This sequence belongs to the peptidase C19 family.

The enzyme catalyses Thiol-dependent hydrolysis of ester, thioester, amide, peptide and isopeptide bonds formed by the C-terminal Gly of ubiquitin (a 76-residue protein attached to proteins as an intracellular targeting signal).. In terms of biological role, deubiquitinase that specifically mediates 'Lys-63'-linked deubiquitination of substrates with a polyubiquitin chain composed of at least 3 ubiquitins. Specifically recognizes ubiquitin chain in position S2 and catalyzes cleavage of polyubiquitin within 'Lys-63'-linked chains. Not able to deubiquitinate substrates with shorter ubiquitin chains. Mediates deubiquitination of PLK4, maintaining PLK4 stability by reducing its ubiquitination-mediated degradation. The sequence is that of Ubiquitin carboxyl-terminal hydrolase 54 (Usp54) from Rattus norvegicus (Rat).